The following is a 395-amino-acid chain: S-adenosylmethionine synthase (395 aa).

ATP is bound at residue His-16. Position 18 (Asp-18) interacts with Mg(2+). Residue Glu-44 coordinates K(+). L-methionine-binding residues include Glu-57 and Gln-100. The flexible loop stretch occupies residues 100–110 (QSPDIAQGVDR). Residues 167-169 (DAK), 233-234 (RF), Asp-242, 248-249 (RK), Ala-265, and Lys-269 each bind ATP. Asp-242 is a binding site for L-methionine. Residue Lys-273 participates in L-methionine binding.

The protein belongs to the AdoMet synthase family. Homotetramer; dimer of dimers. Requires Mg(2+) as cofactor. The cofactor is K(+).

It is found in the cytoplasm. The catalysed reaction is L-methionine + ATP + H2O = S-adenosyl-L-methionine + phosphate + diphosphate. It functions in the pathway amino-acid biosynthesis; S-adenosyl-L-methionine biosynthesis; S-adenosyl-L-methionine from L-methionine: step 1/1. Its function is as follows. Catalyzes the formation of S-adenosylmethionine (AdoMet) from methionine and ATP. The overall synthetic reaction is composed of two sequential steps, AdoMet formation and the subsequent tripolyphosphate hydrolysis which occurs prior to release of AdoMet from the enzyme. In Burkholderia cenocepacia (strain ATCC BAA-245 / DSM 16553 / LMG 16656 / NCTC 13227 / J2315 / CF5610) (Burkholderia cepacia (strain J2315)), this protein is S-adenosylmethionine synthase.